The sequence spans 202 residues: MVIFGLTGGIGSGKSLVASYFKTLFKAVVFDADQVVCQLYNCDNSVIKLVKTYFPDSVDHGVVNKNSLRQHFFAYSNLWVEFQSTLHSIILEKQKNFIMFHNRQSTKYVVLDVPLLIESNFYSCCNFIIHVTTNRLLQMQRVLYRGLSIREFESIIAIQLSENDRKKFANFTIRTGLSKGDVLFQIQKIMFDISHRSKYLSC.

The DPCK domain maps to 3 to 202; sequence IFGLTGGIGS…ISHRSKYLSC (200 aa). 11-16 provides a ligand contact to ATP; it reads GSGKSL.

The protein belongs to the CoaE family.

It is found in the cytoplasm. The enzyme catalyses 3'-dephospho-CoA + ATP = ADP + CoA + H(+). It functions in the pathway cofactor biosynthesis; coenzyme A biosynthesis; CoA from (R)-pantothenate: step 5/5. Functionally, catalyzes the phosphorylation of the 3'-hydroxyl group of dephosphocoenzyme A to form coenzyme A. In Ehrlichia chaffeensis (strain ATCC CRL-10679 / Arkansas), this protein is Dephospho-CoA kinase.